We begin with the raw amino-acid sequence, 72 residues long: MLVVKRKKGESILIGDNIEINIVDIDNGSVKISIQAPREVTILRKELYKEIEEENKKAIKVDMSLLKKLNKK.

This sequence belongs to the CsrA/RsmA family. Homodimer; the beta-strands of each monomer intercalate to form a hydrophobic core, while the alpha-helices form wings that extend away from the core.

The protein localises to the cytoplasm. In terms of biological role, a translational regulator that binds mRNA to regulate translation initiation and/or mRNA stability. Usually binds in the 5'-UTR at or near the Shine-Dalgarno sequence preventing ribosome-binding, thus repressing translation. Its main target seems to be the major flagellin gene, while its function is anatagonized by FliW. In Clostridium novyi (strain NT), this protein is Translational regulator CsrA.